The following is a 111-amino-acid chain: Urease subunit beta (111 aa).

Belongs to the urease beta subunit family. Heterotrimer of UreA (gamma), UreB (beta) and UreC (alpha) subunits. Three heterotrimers associate to form the active enzyme.

Its subcellular location is the cytoplasm. The enzyme catalyses urea + 2 H2O + H(+) = hydrogencarbonate + 2 NH4(+). Its pathway is nitrogen metabolism; urea degradation; CO(2) and NH(3) from urea (urease route): step 1/1. This chain is Urease subunit beta, found in Psychrobacter cryohalolentis (strain ATCC BAA-1226 / DSM 17306 / VKM B-2378 / K5).